Consider the following 148-residue polypeptide: NADH-quinone oxidoreductase subunit C (148 aa).

The protein belongs to the complex I 30 kDa subunit family. As to quaternary structure, NDH-1 is composed of 14 different subunits. Subunits NuoB, C, D, E, F, and G constitute the peripheral sector of the complex.

The protein resides in the cell membrane. The catalysed reaction is a quinone + NADH + 5 H(+)(in) = a quinol + NAD(+) + 4 H(+)(out). In terms of biological role, NDH-1 shuttles electrons from NADH, via FMN and iron-sulfur (Fe-S) centers, to quinones in the respiratory chain. The immediate electron acceptor for the enzyme in this species is believed to be a menaquinone. Couples the redox reaction to proton translocation (for every two electrons transferred, four hydrogen ions are translocated across the cytoplasmic membrane), and thus conserves the redox energy in a proton gradient. The sequence is that of NADH-quinone oxidoreductase subunit C from Moorella thermoacetica (strain ATCC 39073 / JCM 9320).